The following is a 300-amino-acid chain: tRNA dimethylallyltransferase (300 aa).

An ATP-binding site is contributed by 8 to 15; sequence GASASGKS. A substrate-binding site is contributed by 10 to 15; it reads SASGKS. The segment at 33 to 36 is interaction with substrate tRNA; the sequence is DSLS.

The protein belongs to the IPP transferase family. Monomer. Mg(2+) serves as cofactor.

It catalyses the reaction adenosine(37) in tRNA + dimethylallyl diphosphate = N(6)-dimethylallyladenosine(37) in tRNA + diphosphate. Functionally, catalyzes the transfer of a dimethylallyl group onto the adenine at position 37 in tRNAs that read codons beginning with uridine, leading to the formation of N6-(dimethylallyl)adenosine (i(6)A). In Wolinella succinogenes (strain ATCC 29543 / DSM 1740 / CCUG 13145 / JCM 31913 / LMG 7466 / NCTC 11488 / FDC 602W) (Vibrio succinogenes), this protein is tRNA dimethylallyltransferase.